Reading from the N-terminus, the 571-residue chain is Podocalyxin (571 aa).

A signal peptide spans 1 to 22 (MRPAPPPPLLLLLLLLPPPSLS). The Extracellular segment spans residues 23–474 (HDGTIIAATS…EETEDRFSMP (452 aa)). Positions 94-361 (NTVIAPDQDE…QGDDRIKCES (268 aa)) are disordered. Positions 106-116 (STNPTIATSDS) are enriched in polar residues. An N-linked (GlcNAc...) asparagine glycan is attached at asparagine 123. 4 stretches are compositionally biased toward polar residues: residues 126–144 (ILPSATNSMKPDTPVTQTA), 151–169 (NPGTTVSHMTSENTEQTTS), 176–203 (KPSSITPALTSIITPTSPRQPSANSTTL), and 218–245 (TASSSLGTKVVPSSSLYGTSPTRTSSVT). The N-linked (GlcNAc...) asparagine glycan is linked to asparagine 199. Residues 282–300 (TTSLPSETESLESPSSESP) show a composition bias toward low complexity. Pro residues predominate over residues 301–311 (SQPPKLRPTGP). Positions 312-322 (PSSGSSGPAAS) are enriched in low complexity. N-linked (GlcNAc...) asparagine glycans are attached at residues asparagine 373 and asparagine 383. The chain crosses the membrane as a helical span at residues 475 to 495 (LIITIVCMASFLLLVAALYGC). At 496 to 571 (CHQRLSQRKD…DLDEEEDTHL (76 aa)) the chain is on the cytoplasmic side. A Phosphothreonine modification is found at threonine 531. Serine 550 carries the phosphoserine modification. At threonine 569 the chain carries Phosphothreonine.

The protein belongs to the podocalyxin family. As to quaternary structure, found in a complex with EZR, PODXL and NHERF2. Associates with the actin cytoskeleton through complex formation with EZR and NHERF2. Interacts (via the C-terminal PDZ-binding motif DTHL) with NHERF1 (via the PDZ domains); interaction is not detected in glomerular epithelium cells. Interacts (via the C-terminal PDZ-binding motif DTHL) with NHERF2 (via the PDZ 1 domain); interaction is detected in glomerular epithelium cells. Interacts with EZR. Monomer; when associated with the membrane raft. Oligomer; when integrated in the apical membrane. Interacts with NHERF2. Interacts (via the C-terminal PDZ-binding motif DTHL) with NHERF1 (via the PDZ domains); the interaction take place early in the secretory pathway and is necessary for its apical membrane sorting. Post-translationally, N- and O-linked glycosylated. Sialoglycoprotein. As to expression, expressed in glomerular and tubular epithelial cells and peritubular capillaries of the kidney (at protein level). Expressed in heart, lung, renal cortex and medulla, kidney and muscle.

The protein localises to the apical cell membrane. It localises to the membrane raft. It is found in the cell projection. Its subcellular location is the lamellipodium. The protein resides in the filopodium. The protein localises to the ruffle. It localises to the microvillus. It is found in the membrane. In terms of biological role, involved in the regulation of both adhesion and cell morphology and cancer progression. Functions as an anti-adhesive molecule that maintains an open filtration pathway between neighboring foot processes in the podocyte by charge repulsion. Acts as a pro-adhesive molecule, enhancing the adherence of cells to immobilized ligands, increasing the rate of migration and cell-cell contacts in an integrin-dependent manner. Induces the formation of apical actin-dependent microvilli. Involved in the formation of a preapical plasma membrane subdomain to set up initial epithelial polarization and the apical lumen formation during renal tubulogenesis. Plays a role in cancer development and aggressiveness by inducing cell migration and invasion through its interaction with the actin-binding protein EZR. Affects EZR-dependent signaling events, leading to increased activities of the MAPK and PI3K pathways in cancer cells. In Canis lupus familiaris (Dog), this protein is Podocalyxin (PODXL).